A 482-amino-acid polypeptide reads, in one-letter code: tRNA sulfurtransferase (482 aa).

The region spanning L61–R165 is the THUMP domain. ATP contacts are provided by residues L183 to I184, K265, G287, and Q296. C344 and C456 are joined by a disulfide. A Rhodanese domain is found at F404 to P482. The active-site Cysteine persulfide intermediate is the C456.

The protein belongs to the ThiI family.

It localises to the cytoplasm. It carries out the reaction [ThiI sulfur-carrier protein]-S-sulfanyl-L-cysteine + a uridine in tRNA + 2 reduced [2Fe-2S]-[ferredoxin] + ATP + H(+) = [ThiI sulfur-carrier protein]-L-cysteine + a 4-thiouridine in tRNA + 2 oxidized [2Fe-2S]-[ferredoxin] + AMP + diphosphate. The catalysed reaction is [ThiS sulfur-carrier protein]-C-terminal Gly-Gly-AMP + S-sulfanyl-L-cysteinyl-[cysteine desulfurase] + AH2 = [ThiS sulfur-carrier protein]-C-terminal-Gly-aminoethanethioate + L-cysteinyl-[cysteine desulfurase] + A + AMP + 2 H(+). It functions in the pathway cofactor biosynthesis; thiamine diphosphate biosynthesis. In terms of biological role, catalyzes the ATP-dependent transfer of a sulfur to tRNA to produce 4-thiouridine in position 8 of tRNAs, which functions as a near-UV photosensor. Also catalyzes the transfer of sulfur to the sulfur carrier protein ThiS, forming ThiS-thiocarboxylate. This is a step in the synthesis of thiazole, in the thiamine biosynthesis pathway. The sulfur is donated as persulfide by IscS. The sequence is that of tRNA sulfurtransferase from Salmonella agona (strain SL483).